The following is a 290-amino-acid chain: Undecaprenyl-diphosphatase (290 aa).

8 helical membrane passes run 1 to 21, 49 to 69, 101 to 121, 126 to 146, 160 to 180, 203 to 223, 232 to 252, and 266 to 286; these read MALW…FLPV, MILF…VVFW, LFWL…TLKA, VFAS…LLWW, INLK…MPGL, YSFF…AIEV, VGFS…IISL, and VFSF…IDLA.

The protein belongs to the UppP family.

The protein resides in the cell inner membrane. The enzyme catalyses di-trans,octa-cis-undecaprenyl diphosphate + H2O = di-trans,octa-cis-undecaprenyl phosphate + phosphate + H(+). Catalyzes the dephosphorylation of undecaprenyl diphosphate (UPP). Confers resistance to bacitracin. The chain is Undecaprenyl-diphosphatase from Alkalilimnicola ehrlichii (strain ATCC BAA-1101 / DSM 17681 / MLHE-1).